A 591-amino-acid chain; its full sequence is uncharacterized protein (591 aa).

The signal sequence occupies residues 1–30 (MGKLLFGKLVFKKSLFLLSGMSSLAVFLTA). A lipid anchor (N-palmitoyl cysteine) is attached at cysteine 31. Residue cysteine 31 is the site of S-diacylglycerol cysteine attachment. The span at 476–488 (KKKLSEVATKKNE) shows a compositional bias: basic and acidic residues. 2 disordered regions span residues 476-497 (KKKL…NGSN) and 510-535 (SSSS…DNDG). A compositionally biased stretch (low complexity) spans 510–523 (SSSSTSMRNGSSDS).

This sequence to T.pallidum TmpC.

The protein resides in the cell membrane. This is an uncharacterized protein from Mycoplasma genitalium (strain ATCC 33530 / DSM 19775 / NCTC 10195 / G37) (Mycoplasmoides genitalium).